The sequence spans 123 residues: Large ribosomal subunit protein bL12 (123 aa).

The protein belongs to the bacterial ribosomal protein bL12 family. As to quaternary structure, homodimer. Part of the ribosomal stalk of the 50S ribosomal subunit. Forms a multimeric L10(L12)X complex, where L10 forms an elongated spine to which 2 to 4 L12 dimers bind in a sequential fashion. Binds GTP-bound translation factors.

Functionally, forms part of the ribosomal stalk which helps the ribosome interact with GTP-bound translation factors. Is thus essential for accurate translation. In Bartonella tribocorum (strain CIP 105476 / IBS 506), this protein is Large ribosomal subunit protein bL12.